A 149-amino-acid polypeptide reads, in one-letter code: Probable flagellum biosynthesis repressor protein FlbT (149 aa).

The protein belongs to the FlbT family.

In terms of biological role, has a post-transcriptional repressor function in flagellum biogenesis. Associates with the 5'-UTR of fljK mRNA and promotes its degradation. The chain is Probable flagellum biosynthesis repressor protein FlbT from Rhizobium etli (strain CIAT 652).